We begin with the raw amino-acid sequence, 328 residues long: CMP-N-acetylneuraminate-beta-galactosamide-alpha-2,3-sialyltransferase 4 (328 aa).

At 1–7 (MCPAGWK) the chain is on the cytoplasmic side. The chain crosses the membrane as a helical; Signal-anchor for type II membrane protein span at residues 8-25 (LLAMLALVLVVMVWYSIS). Over 26–328 (REDSFYFPIP…MGAVKNLTSF (303 aa)) the chain is Lumenal. Residues N56, N126, N305, and N324 are each glycosylated (N-linked (GlcNAc...) asparagine). Cysteines 115 and 268 form a disulfide.

The protein belongs to the glycosyltransferase 29 family. Post-translationally, the soluble form derives from the membrane form by proteolytic processing.

It is found in the golgi apparatus. The protein localises to the golgi stack membrane. It localises to the secreted. It catalyses the reaction a beta-D-galactosyl-(1-&gt;3)-N-acetyl-beta-D-galactosaminyl derivative + CMP-N-acetyl-beta-neuraminate = an N-acetyl-alpha-neuraminyl-(2-&gt;3)-beta-D-galactosyl-(1-&gt;3)-N-acetyl-beta-D-galactosaminyl derivative + CMP + H(+). The catalysed reaction is a beta-D-galactosyl-(1-&gt;3)-N-acetyl-alpha-D-galactosaminyl derivative + CMP-N-acetyl-beta-neuraminate = an N-acetyl-alpha-neuraminyl-(2-&gt;3)-beta-D-galactosyl-(1-&gt;3)-N-acetyl-alpha-D-galactosaminyl derivative + CMP + H(+). It carries out the reaction a beta-D-galactosyl-(1-&gt;4)-N-acetyl-beta-D-glucosaminyl derivative + CMP-N-acetyl-beta-neuraminate = an N-acetyl-alpha-neuraminyl-(2-&gt;3)-beta-D-galactosyl-(1-&gt;4)-N-acetyl-beta-D-glucosaminyl derivative + CMP + H(+). The enzyme catalyses a ganglioside GM1 (d18:1(4E)) + CMP-N-acetyl-beta-neuraminate = a ganglioside GD1a (d18:1(4E)) + CMP + H(+). It catalyses the reaction a ganglioside GA1 (d18:1(4E)) + CMP-N-acetyl-beta-neuraminate = a ganglioside GM1b (d18:1(4E)) + CMP + H(+). The catalysed reaction is a ganglioside GT1c (d18:1(4E)) + CMP-N-acetyl-beta-neuraminate = a ganglioside GQ1c (d18:1(4E)) + CMP + H(+). It carries out the reaction a neolactoside nLc4Cer + CMP-N-acetyl-beta-neuraminate = a neolactoside IV(3)-alpha-NeuAc-nLc4Cer + CMP + H(+). The enzyme catalyses a neolactoside nLc4Cer(d18:1(4E)) + CMP-N-acetyl-beta-neuraminate = a neolactoside IV(3)-alpha-NeuAc-nLc4Cer(d18:1(4E)) + CMP + H(+). The protein operates within protein modification; protein glycosylation. It participates in glycolipid biosynthesis. A beta-galactoside alpha2-3 sialyltransferase involved in terminal sialylation of glycoproteins and glycolipids. Catalyzes the transfer of sialic acid (N-acetyl-neuraminic acid; Neu5Ac) from the nucleotide sugar donor CMP-Neu5Ac onto acceptor Galbeta-(1-&gt;3)-GalNAc- and Galbeta-(1-&gt;4)-GlcNAc-terminated glycoconjugates through an alpha2-3 linkage. Plays a major role in hemostasis. Responsible for sialylation of plasma VWF/von Willebrand factor, preventing its recognition by asialoglycoprotein receptors (ASGPR) and subsequent clearance. Regulates ASGPR-mediated clearance of platelets. Participates in the biosynthesis of the sialyl Lewis X epitopes, both on O- and N-glycans, which are recognized by SELE/E-selectin, SELP/P-selectin and SELL/L-selectin. Essential for selectin-mediated rolling and adhesion of leukocytes during extravasation. Contributes to adhesion and transendothelial migration of neutrophils likely through terminal sialylation of CXCR2. In glycosphingolipid biosynthesis, sialylates GM1 and GA1 gangliosides to form GD1a and GM1b, respectively. Metabolizes brain c-series ganglioside GT1c forming GQ1c. Synthesizes ganglioside LM1 (IV3Neu5Ac-nLc4Cer), a major structural component of peripheral nerve myelin. The polypeptide is CMP-N-acetylneuraminate-beta-galactosamide-alpha-2,3-sialyltransferase 4 (ST3GAL4) (Pan troglodytes (Chimpanzee)).